The chain runs to 95 residues: Protein TusB (95 aa).

Belongs to the DsrH/TusB family. Heterohexamer, formed by a dimer of trimers. The hexameric TusBCD complex contains 2 copies each of TusB, TusC and TusD. The TusBCD complex interacts with TusE.

Its subcellular location is the cytoplasm. Functionally, part of a sulfur-relay system required for 2-thiolation of 5-methylaminomethyl-2-thiouridine (mnm(5)s(2)U) at tRNA wobble positions. This is Protein TusB from Yersinia pseudotuberculosis serotype O:1b (strain IP 31758).